We begin with the raw amino-acid sequence, 493 residues long: Galactose-1-phosphate uridylyltransferase (493 aa).

It belongs to the galactose-1-phosphate uridylyltransferase type 2 family.

The protein localises to the cytoplasm. The enzyme catalyses alpha-D-galactose 1-phosphate + UDP-alpha-D-glucose = alpha-D-glucose 1-phosphate + UDP-alpha-D-galactose. Its pathway is carbohydrate metabolism; galactose metabolism. The sequence is that of Galactose-1-phosphate uridylyltransferase from Streptococcus pneumoniae (strain Hungary19A-6).